A 494-amino-acid chain; its full sequence is Probable cytosol aminopeptidase (494 aa).

Residues Lys-264 and Asp-269 each contribute to the Mn(2+) site. Lys-276 is an active-site residue. Mn(2+)-binding residues include Asp-287, Asp-346, and Glu-348. Arg-350 is an active-site residue.

It belongs to the peptidase M17 family. Mn(2+) serves as cofactor.

The protein localises to the cytoplasm. It carries out the reaction Release of an N-terminal amino acid, Xaa-|-Yaa-, in which Xaa is preferably Leu, but may be other amino acids including Pro although not Arg or Lys, and Yaa may be Pro. Amino acid amides and methyl esters are also readily hydrolyzed, but rates on arylamides are exceedingly low.. The catalysed reaction is Release of an N-terminal amino acid, preferentially leucine, but not glutamic or aspartic acids.. Its function is as follows. Presumably involved in the processing and regular turnover of intracellular proteins. Catalyzes the removal of unsubstituted N-terminal amino acids from various peptides. In Pasteurella multocida (strain Pm70), this protein is Probable cytosol aminopeptidase (pepA).